We begin with the raw amino-acid sequence, 609 residues long: Manganese lipoxygenase (609 aa).

The first 16 residues, methionine 1–alanine 16, serve as a signal peptide directing secretion. Residues asparagine 24, asparagine 115, asparagine 156, and asparagine 193 are each glycosylated (N-linked (GlcNAc...) asparagine). A Lipoxygenase domain is found at serine 117–valine 609. Histidine 289 and histidine 294 together coordinate Mn(2+). The N-linked (GlcNAc...) asparagine glycan is linked to asparagine 385. Residues histidine 474 and asparagine 478 each contribute to the Mn(2+) site. A glycan (N-linked (GlcNAc...) asparagine) is linked at asparagine 539. Position 609 (valine 609) interacts with Mn(2+).

Belongs to the lipoxygenase family. Manganese lipoxygenase subfamily. It depends on Mn(2+) as a cofactor. N- and O-glycosylated.

The protein localises to the secreted. It carries out the reaction (9Z,12Z)-octadecadienoate + O2 = (9S)-hydroperoxy-(10E,12Z)-octadecadienoate. The enzyme catalyses (9Z,12Z)-octadecadienoate + O2 = (11S)-hydroperoxy-(9Z,12Z)-octadecadienoate. The catalysed reaction is (9Z,12Z)-octadecadienoate + O2 = (13R)-hydroperoxy-(9Z,11E)-octadecadienoate. It catalyses the reaction (9Z,12Z,15Z)-octadecatrienoate + O2 = (11R)-hydroperoxy-(9Z,12Z,15Z)-octadecatrienoate. Its function is as follows. Lipoxygenase that metabolizes linoleic and alpha-linolenic acids to 9-, 11- and 13-hydroperoxy fatty acids. Oxidizes linoleic acid to mainly 9S- and 13R-HPODE and alpha-linolenic acid to 11R-HPOTrE. The protein is Manganese lipoxygenase of Colletotrichum gloeosporioides (strain Cg-14) (Anthracnose fungus).